We begin with the raw amino-acid sequence, 289 residues long: Tachykinins (289 aa).

An N-terminal signal peptide occupies residues 1 to 24 (MRSQGGSFAVALLLLLLLTAAATA). A propeptide spanning residues 25-49 (ADAEPDVESSVSTLPPGADAPRRMV) is cleaved from the precursor. Residues 28–80 (EPDVESSVSTLPPGADAPRRMVKRAPTSSFIGMRGKKEDEKDQRAADWMGPDP) are disordered. Arginine amide is present on R61. Residues 62–72 (GKKEDEKDQRA) are compositionally biased toward basic and acidic residues. N95 is subject to Asparagine amide. The residue at position 110 (R110) is an Arginine amide. The residue at position 155 (V155) is a Valine amide. The tract at residues 156 to 175 (GKRAPTGFTGMRGKRPMSGD) is disordered. Arginine amide occurs at positions 167, 198, 237, and 281. Residues 285–289 (PALAE) constitute a propeptide that is removed on maturation.

It belongs to the tachykinin family.

The protein resides in the secreted. Its function is as follows. Tachykinins are active peptides which excite neurons, evoke behavioral responses, are potent vasodilators and secretagogues, and contract (directly or indirectly) many smooth muscles. Stimulates gut muscle contractions. The chain is Tachykinins from Drosophila pseudoobscura pseudoobscura (Fruit fly).